The sequence spans 425 residues: SrfA-induced gene G protein (425 aa).

3 N-linked (GlcNAc...) asparagine glycosylation sites follow: N25, N28, and N36. 3 coiled-coil regions span residues 41–91 (RDSE…RIRN), 172–208 (HEKQILEKTLRRHQQEQDNNNNNKKTIENQMERMKRT), and 292–340 (KFGQ…NYNI). A helical membrane pass occupies residues 91–113 (NVFKVLITILVGSIIYGTYTNQF). Residues 393-413 (KKPHADSNGHPKPYPHHHLLN) form a disordered region.

Its subcellular location is the membrane. The protein is SrfA-induced gene G protein (sigG) of Dictyostelium discoideum (Social amoeba).